The sequence spans 97 residues: uncharacterized protein (97 aa).

The N-terminal stretch at Met1–Cys21 is a signal peptide.

This is an uncharacterized protein from Schizosaccharomyces pombe (strain 972 / ATCC 24843) (Fission yeast).